Here is a 748-residue protein sequence, read N- to C-terminus: Basic juvenile hormone-suppressible protein 1 (748 aa).

The N-terminal stretch at 1 to 17 (MRVLVLVASLGLRGSVV) is a signal peptide.

The protein belongs to the hemocyanin family. Fat body, and hemolymph of larvae.

The polypeptide is Basic juvenile hormone-suppressible protein 1 (BJSP-1) (Trichoplusia ni (Cabbage looper)).